The chain runs to 629 residues: MTKFEQYFDYVKISLASPEKIRQWGERSLPNGQIVGEITKPETINYRTLKPEMDGLFCEKIFGPVKDWECHCGKYKRFRYKGIVCERCGVEVTESRVRRHRMAYIELASPVTHVWYLKGSTSYIALALDLKVKEVEKIVYFHSYVVTQSNTDINLKYKQLLEGYEWKSLEEEIYQNQDENNQVEVGIGAEAIQKLLKDLDLEHIAETLRSEATNPPKSFKTPSLKFNKKMKRLRLIENFIATGADPSWMVFTVIPVIPPDLRPMVQLDGGRFATADLNEFYRRIINRNNRLSRLKSILAPEIIIRNEKRMLQEAVDSLMDNGRRGRTVVGANNRPLKSLSDIIEGKQGRFRQNLLGKRVDYSGRSVIVVGPHLKLHQCGLPREMALELFQPFVIHRLILQGLVNNIKAAKKMIQKNESSIWNVLNEVIQGHPVLLNRAPTLHRLGIQAFEPILVEGRAIKLHPLVCPAFNADFDGDQMAVHVPLSLEAQAEARLLMLAPHNFLSPATGQPIIMPSQDMVLGCYYLTANNPSQQQGSNQYFASLEDVVMAYEQKKIDLHSYIWARFDGLVDGDQPHDPIKIEKHSDNSTTKFFNNHIIKEDAENQRIVQYIRTTAGRIIFNKIIQESLLA.

The Zn(2+) site is built by Cys70, Cys72, Cys85, and Cys88. Residues Asp472, Asp474, and Asp476 each contribute to the Mg(2+) site.

This sequence belongs to the RNA polymerase beta' chain family. RpoC1 subfamily. As to quaternary structure, in plastids the minimal PEP RNA polymerase catalytic core is composed of four subunits: alpha, beta, beta', and beta''. When a (nuclear-encoded) sigma factor is associated with the core the holoenzyme is formed, which can initiate transcription. Mg(2+) is required as a cofactor. Zn(2+) serves as cofactor.

It is found in the plastid. It localises to the chloroplast. The enzyme catalyses RNA(n) + a ribonucleoside 5'-triphosphate = RNA(n+1) + diphosphate. Its function is as follows. DNA-dependent RNA polymerase catalyzes the transcription of DNA into RNA using the four ribonucleoside triphosphates as substrates. This chain is DNA-directed RNA polymerase subunit beta', found in Pyropia yezoensis (Susabi-nori).